Reading from the N-terminus, the 1153-residue chain is AP-3 complex subunit delta-1 (1153 aa).

Residue alanine 2 is modified to N-acetylalanine. 11 HEAT repeats span residues 34–71, 77–114, 142–179, 180–216, 254–292, 299–336, 338–373, 375–409, 431–468, 497–535, and 548–585; these read KYISQCIDEIKQELKQDNIAVKANAVCKLTYLQMLGYD, FNIIEVMSASKFTFKRIGYLAASQSFHEGTDVIMLTTN, DLARDLANDIMTLMSHTKPYIRKKAVLIMYKVFLKYPE, SLRPAFPRLKEKLEDPDPGVQSAAVNVICELARRNPK, RLGKKLIEPLTNLIHSTSAMSLLYECVNTVIAVLISLSS, ASIQLCVQKLRILIEDSDQNLKYLGLLAMSKILKTHPK, VQSHKDLILQCLDDKDESIRLRALDLLYGMVSKKNL, EIVKKLMTHVDKAEGTTYRDELLTKIIDICSQSNY, TRHGHLIAAQMLDVAIRVKAIRKFAVSQMSALLDSAHL, QEPHHTLEAMLRPRVTTLPGHIQAVYVQNVVKLYASILQ, and AVTQLMVDRLPQFVQSADLEVQERASCILQLVKHIQKL. Disordered regions lie at residues 629-696 and 726-920; these read EPLS…YQDT and KLEE…PPES. Phosphoserine is present on residues serine 632, serine 634, serine 636, and serine 658. The span at 639–675 shows a compositional bias: basic and acidic residues; that stretch reads ERPRAVFHEEEQRRPKHRPSEADEEELARRREARKQE. Residues 659–679 adopt a coiled-coil conformation; the sequence is EADEEELARRREARKQEQANN. Residue serine 688 is modified to Phosphoserine. Residues 725–756 are a coiled coil; that stretch reads VKLEEERRHRQKLEKDKRRKKRKEKEKKGKRR. Residues 726–740 are compositionally biased toward basic and acidic residues; the sequence is KLEEERRHRQKLEKD. Basic residues predominate over residues 741–758; it reads KRRKKRKEKEKKGKRRHS. Phosphoserine is present on residues serine 758 and serine 759. At threonine 762 the chain carries Phosphothreonine. Phosphoserine occurs at positions 764, 785, 788, 828, and 829. Over residues 777-794 the composition is skewed to acidic residues; that stretch reads VTEEMPENALPSDEDDKD. The span at 795–839 shows a compositional bias: basic and acidic residues; it reads PNDPYRALDIDLDKPLADSEKLPIQKHRNTETSKSPEKDVPMVEK. 2 stretches are compositionally biased toward basic residues: residues 840 to 853 and 863 to 879; these read KSKKPKKKEKKHKE and EKEKKKSPKPKKKKHRK. Residues 845 to 869 are a coiled coil; that stretch reads KKKEKKHKEKERDKEKKKEKEKKKS. Phosphoserine is present on valine 931.

The protein belongs to the adaptor complexes large subunit family. As to quaternary structure, AP-3 associates with the BLOC-1 complex. Adaptor protein complex 3 (AP-3) is a heterotetramer composed of two large adaptins (delta-type subunit AP3D1 and beta-type subunit AP3B1 or AP3B2), a medium adaptin (mu-type subunit AP3M1 or AP3M2) and a small adaptin (sigma-type subunit APS1 or AP3S2). Interacts with SLC30A2. Interacts with CLN3 (via dileucine motif); this interaction facilitates lysosomal targeting. As to expression, present in all adult tissues examined with the highest levels in skeletal muscle, heart, pancreas and testis.

The protein localises to the cytoplasm. It is found in the golgi apparatus membrane. Its function is as follows. Part of the AP-3 complex, an adaptor-related complex which is not clathrin-associated. The complex is associated with the Golgi region as well as more peripheral structures. It facilitates the budding of vesicles from the Golgi membrane and may be directly involved in trafficking to lysosomes. Involved in process of CD8+ T-cell and NK cell degranulation. In concert with the BLOC-1 complex, AP-3 is required to target cargos into vesicles assembled at cell bodies for delivery into neurites and nerve terminals. This chain is AP-3 complex subunit delta-1 (AP3D1), found in Homo sapiens (Human).